The sequence spans 460 residues: MLKILIPTLMLFPTIWFSPAKWLWTTSIAQSLVIALASLSWLKWSSETGWSSSNLYLATDPLSTPLLVLTCWLLPLMVLASQNHISPEPLNRQRTYISLLVSLQMFLILAFGATEIIMFYIMFEATLLPTLIIITRWGNQTERLNAGTYFLFYTLAGSLPLLVALLLLQNDSGTLSMFTLQYTQPMHLLTWGNKLWWAACLLAFLVKMPVYGVHLWLPKAHVEAPIAGSMILAAVLLKLGGYGMMRMMVMLDPLTKELAYPFIVLALWGIIMTGSICLRQTDLKSLIAYSSVGHMGLVAGGILIQTPWGFTGAIILMIAHGLASSALFCLANTSYERTHSRTMLLARGMQMILPLMTTWWFVASLANLALPPLPNLMGELMIITSMFNWSHWTLLLTGLGTLITASYSLYLFLMTQRGPLPSHIIALEPTHTREHLLITLHLIPIILLILKPELMWGWCF.

13 consecutive transmembrane segments (helical) span residues 20–42, 61–81, 94–113, 117–139, 148–168, 195–215, 225–245, 258–278, 285–304, 308–330, 351–371, 394–414, and 436–456; these read AKWL…LSWL, PLST…VLAS, RTYI…AFGA, IMFY…RWGN, TYFL…LLLL, LWWA…GVHL, PIAG…YGMM, LAYP…SICL, SLIA…GILI, WGFT…LFCL, MILP…LALP, LLLT…LFLM, and LLIT…ELMW.

It belongs to the complex I subunit 4 family.

Its subcellular location is the mitochondrion membrane. It catalyses the reaction a ubiquinone + NADH + 5 H(+)(in) = a ubiquinol + NAD(+) + 4 H(+)(out). Functionally, core subunit of the mitochondrial membrane respiratory chain NADH dehydrogenase (Complex I) that is believed to belong to the minimal assembly required for catalysis. Complex I functions in the transfer of electrons from NADH to the respiratory chain. The immediate electron acceptor for the enzyme is believed to be ubiquinone. This chain is NADH-ubiquinone oxidoreductase chain 4 (MT-ND4), found in Salmo salar (Atlantic salmon).